Here is a 237-residue protein sequence, read N- to C-terminus: Sulfolipid-1 exporter Sap (237 aa).

Transmembrane regions (helical) follow at residues 5–25, 38–58, 66–86, 141–161, 171–191, and 217–237; these read VLVL…VVLM, FLCG…VVLG, FSVA…AFAL, VSGL…AAIL, ALAV…PLVS, and DAAL…LSNL.

Belongs to the peptidoglycolipid addressing protein (GAP) (TC 2.A.116) family.

It localises to the cell inner membrane. Required for the transport across the inner membrane of sulfolipid-1 (SL-1), which is a major cell wall lipid of pathogenic mycobacteria. Could also transport SL1278 (2-palmitoyl-3-(C43)-phthioceranyl-alpha, alpha'-D-trehalose-2'-sulfate), which is the precursor of SL-1. May potentiate SL-1 levels and confer specificity for sulfolipids over structurally similar glycolipids. The protein is Sulfolipid-1 exporter Sap of Mycobacterium tuberculosis (strain ATCC 25618 / H37Rv).